Reading from the N-terminus, the 201-residue chain is Recombination protein RecR (201 aa).

The C4-type zinc-finger motif lies at 60-75 (CSCCGNVDTIDPCTVC). The 96-residue stretch at 83-178 (SVIIVVEDVA…KITRLAHGVP (96 aa)) folds into the Toprim domain.

It belongs to the RecR family.

May play a role in DNA repair. It seems to be involved in an RecBC-independent recombinational process of DNA repair. It may act with RecF and RecO. This Sinorhizobium fredii (strain NBRC 101917 / NGR234) protein is Recombination protein RecR.